The chain runs to 382 residues: Quinolinate synthase (382 aa).

The iminosuccinate site is built by His-63 and Ser-84. Cys-129 provides a ligand contact to [4Fe-4S] cluster. Iminosuccinate contacts are provided by residues 155-157 (YAN) and Ser-172. Residue Cys-216 coordinates [4Fe-4S] cluster. Residues 242–244 (HPE) and Thr-259 contribute to the iminosuccinate site. Residue Cys-313 participates in [4Fe-4S] cluster binding.

It belongs to the quinolinate synthase family. Type 1 subfamily. [4Fe-4S] cluster serves as cofactor.

Its subcellular location is the cytoplasm. The catalysed reaction is iminosuccinate + dihydroxyacetone phosphate = quinolinate + phosphate + 2 H2O + H(+). It participates in cofactor biosynthesis; NAD(+) biosynthesis; quinolinate from iminoaspartate: step 1/1. Catalyzes the condensation of iminoaspartate with dihydroxyacetone phosphate to form quinolinate. This chain is Quinolinate synthase, found in Ralstonia pickettii (strain 12J).